Consider the following 526-residue polypeptide: MELKTEEEEVGGVQPVSIQAFASSSTLHGLAHIFSYERLSLKRALWALCFLGSLAVLLCVCTERVQYYFCYHHVTKLDEVAASQLTFPAVTLCNLNEFRFSQVSKNDLYHAGELLALLNNRYEIPDTQMADEKQLEILQDKANFRSFKPKPFNMREFYDRAGHDIRDMLLSCHFRGEACSAEDFKVVFTRYGKCYTFNSGQDGRPRLKTMKGGTGNGLEIMLDIQQDEYLPVWGETDETSFEAGIKVQIHSQDEPPFIDQLGFGVAPGFQTFVSCQEQRLIYLPSPWGTCNAVTMDSDFFDSYSITACRIDCETRYLVENCNCRMVHMPGDAPYCTPEQYKECADPALDFLVEKDQEYCVCEMPCNLTRYGKELSMVKIPSKASAKYLAKKFNKSEQYIGENILVLDIFFEVLNYETIEQKKAYEIAGLLGDIGGQMGLFIGASILTVLELFDYAYEVIKHRLCRRGKCQKEAKRNSADKGVALSLDDVKRHNPCESLRGHPAGMTYAANILPHHPARGTFEDFTC.

Topologically, residues 1-49 (MELKTEEEEVGGVQPVSIQAFASSSTLHGLAHIFSYERLSLKRALWALC) are cytoplasmic. The helical transmembrane segment at 50-66 (FLGSLAVLLCVCTERVQ) threads the bilayer. The Extracellular portion of the chain corresponds to 67–425 (YYFCYHHVTK…ETIEQKKAYE (359 aa)). Intrachain disulfides connect cysteine 93–cysteine 194, cysteine 172–cysteine 179, cysteine 290–cysteine 365, cysteine 308–cysteine 361, cysteine 312–cysteine 359, cysteine 321–cysteine 343, and cysteine 323–cysteine 335. 2 N-linked (GlcNAc...) asparagine glycosylation sites follow: asparagine 366 and asparagine 393. The discontinuously helical transmembrane segment at 426–456 (IAGLLGDIGGQMGLFIGASILTVLELFDYAY) threads the bilayer. Residues 442–444 (GAS) carry the GAS motif; ion selectivity filter motif. Over 457 to 526 (EVIKHRLCRR…ARGTFEDFTC (70 aa)) the chain is Cytoplasmic. Serine 477 carries the post-translational modification Phosphoserine; by PKA. Serine 497 carries the post-translational modification Phosphoserine.

Belongs to the amiloride-sensitive sodium channel (TC 1.A.6) family. ASIC1 subfamily. As to quaternary structure, homotrimer. Heterotrimer; with other ASIC proteins producing channel with different properties. Interacts with PICK1; regulates ASIC1 clustering in membranes. Interacts with STOM; alters heterotrimeric ASIC channels activity. In terms of processing, pH-gating could be regulated by serine proteases. Phosphorylation by PKA regulates interaction with PICK1 and subcellular localization. Phosphorylation by PKC may regulate the channel. As to expression, expressed in brain areas receiving strong excitatory corticofugal input. In hippocampus, expressed in the hilus of the dentate gyrus. In the cerebral cortex expressed in anterior and posterior cingulate cortex, sensory and motor cortices. In the sensory cortex strongest expression is detected in the whisker barrel field. In sensorimotor and cingulate cortex expression is elevated in layer III. Also expressed in basal ganglia, striatum, ventral pallidum, olfactory tubercle, and nucleus accumbens. Weakly expressed in thalamus with the exception of the habenula and the medial septal nuclei. In olfactory bulb, preferentially expressed in the glomerular layer, within glomeruli. Expressed in cerebellum in the molecular and granule cell layers. Strongly expressed in amygdala complex, particularly in the lateral and basolateral nuclei. Isoform 1 is more abundant in brain compared to isoform 2 (at protein level). Expressed in the nodose ganglion and dorsal root ganglion. Expressed in dendritic spine cells.

Its subcellular location is the cell membrane. It localises to the postsynaptic cell membrane. It is found in the cell projection. The protein localises to the dendrite. The catalysed reaction is Na(+)(in) = Na(+)(out). The enzyme catalyses Ca(2+)(in) = Ca(2+)(out). It carries out the reaction K(+)(in) = K(+)(out). It catalyses the reaction Li(+)(in) = Li(+)(out). Its activity is regulated as follows. Inhibited by the diuretic drug amiloride. With respect to regulation, the activity of the channel is sensitive to rapid decrease in osmotic pressure. In terms of biological role, forms voltage-independent, pH-gated trimeric sodium channels that act as postsynaptic excitatory receptors in the nervous system, playing a crucial role in regulating synaptic plasticity, learning, and memory. Upon extracellular pH drop this channel elicits transient, fast activating, and completely desensitizing inward currents. Displays high selectivity for sodium ions but can also permit the permeation of other cations. Regulates more or less directly intracellular calcium concentration and CaMKII phosphorylation, and thereby the density of dendritic spines. Modulates neuronal activity in the circuits underlying innate fear. Its function is as follows. Has high selectivity for sodium ions but is also potentially permeable to other cations including potassium. Could function in cochlear mechanoelectrical transduction. The chain is Acid-sensing ion channel 1 from Mus musculus (Mouse).